The sequence spans 220 residues: Ribose-5-phosphate isomerase A (220 aa).

Residues 28 to 31 (TGST), 81 to 84 (DGAD), and 94 to 97 (KGGG) each bind substrate. Residue Glu-103 is the Proton acceptor of the active site. Residue Lys-121 participates in substrate binding.

This sequence belongs to the ribose 5-phosphate isomerase family. Homodimer.

It catalyses the reaction aldehydo-D-ribose 5-phosphate = D-ribulose 5-phosphate. It functions in the pathway carbohydrate degradation; pentose phosphate pathway; D-ribose 5-phosphate from D-ribulose 5-phosphate (non-oxidative stage): step 1/1. In terms of biological role, catalyzes the reversible conversion of ribose-5-phosphate to ribulose 5-phosphate. In Hydrogenovibrio crunogenus (strain DSM 25203 / XCL-2) (Thiomicrospira crunogena), this protein is Ribose-5-phosphate isomerase A.